The chain runs to 1298 residues: Phosphoribosylformylglycinamidine synthase (1298 aa).

The tract at residues 301–328 (APFPGASTGSGGEIRDEGATGRGAKPKA) is disordered. Residues 305–316 (GASTGSGGEIRD), 384–386 (TGY), and Ala676 contribute to the ATP site. Positions 677, 716, 720, and 884 each coordinate Mg(2+). Residue Ser886 participates in ATP binding. The 254-residue stretch at 1045 to 1298 (VAVLREQGVN…MFRNARVWVN (254 aa)) folds into the Glutamine amidotransferase type-1 domain. Residue Cys1138 is the Nucleophile of the active site. Catalysis depends on residues His1263 and Glu1265.

In the N-terminal section; belongs to the FGAMS family. In terms of assembly, monomer.

Its subcellular location is the cytoplasm. The catalysed reaction is N(2)-formyl-N(1)-(5-phospho-beta-D-ribosyl)glycinamide + L-glutamine + ATP + H2O = 2-formamido-N(1)-(5-O-phospho-beta-D-ribosyl)acetamidine + L-glutamate + ADP + phosphate + H(+). It participates in purine metabolism; IMP biosynthesis via de novo pathway; 5-amino-1-(5-phospho-D-ribosyl)imidazole from N(2)-formyl-N(1)-(5-phospho-D-ribosyl)glycinamide: step 1/2. In terms of biological role, phosphoribosylformylglycinamidine synthase involved in the purines biosynthetic pathway. Catalyzes the ATP-dependent conversion of formylglycinamide ribonucleotide (FGAR) and glutamine to yield formylglycinamidine ribonucleotide (FGAM) and glutamate. The chain is Phosphoribosylformylglycinamidine synthase from Pseudomonas fluorescens (strain Pf0-1).